The following is a 1264-amino-acid chain: uncharacterized protein (1264 aa).

An N-terminal signal peptide occupies residues 1-18 (MMRKYLILLILLPALAVG). A helical transmembrane segment spans residues 1215-1235 (SYTVLGVVVITILTMSIILCL).

Its subcellular location is the host membrane. This is an uncharacterized protein from Ostreid herpesvirus 1 (isolate France) (OsHV-1).